Consider the following 61-residue polypeptide: Truncated Cytokine response-modifying protein B (61 aa).

Its function is as follows. The protein is truncated in this strain and presumably inactive. It has similarities with variola virus CrmB, but the product is inactivated due to several premature stop codon. This is Truncated Cytokine response-modifying protein B from Bos taurus (Bovine).